The chain runs to 114 residues: T cell receptor alpha variable 10 (114 aa).

The N-terminal stretch at 1 to 21 is a signal peptide; that stretch reads MKKHLTTFLVILWLYFYRGNG. In terms of domain architecture, Ig-like spans 23–114; it reads NQVEQSPQSL…DSASYICVVS (92 aa). N-linked (GlcNAc...) asparagine glycans are attached at residues N39 and N45. A disulfide bridge connects residues C44 and C111.

As to quaternary structure, alpha-beta TR is a heterodimer composed of an alpha and beta chain; disulfide-linked. The alpha-beta TR is associated with the transmembrane signaling CD3 coreceptor proteins to form the TR-CD3 (TcR or TCR). The assembly of alpha-beta TR heterodimers with CD3 occurs in the endoplasmic reticulum where a single alpha-beta TR heterodimer associates with one CD3D-CD3E heterodimer, one CD3G-CD3E heterodimer and one CD247 homodimer forming a stable octameric structure. CD3D-CD3E and CD3G-CD3E heterodimers preferentially associate with TR alpha and TR beta chains, respectively. The association of the CD247 homodimer is the last step of TcR assembly in the endoplasmic reticulum and is required for transport to the cell surface.

The protein localises to the cell membrane. Its function is as follows. V region of the variable domain of T cell receptor (TR) alpha chain that participates in the antigen recognition. Alpha-beta T cell receptors are antigen specific receptors which are essential to the immune response and are present on the cell surface of T lymphocytes. Recognize peptide-major histocompatibility (MH) (pMH) complexes that are displayed by antigen presenting cells (APC), a prerequisite for efficient T cell adaptive immunity against pathogens. Binding of alpha-beta TR to pMH complex initiates TR-CD3 clustering on the cell surface and intracellular activation of LCK that phosphorylates the ITAM motifs of CD3G, CD3D, CD3E and CD247 enabling the recruitment of ZAP70. In turn ZAP70 phosphorylates LAT, which recruits numerous signaling molecules to form the LAT signalosome. The LAT signalosome propagates signal branching to three major signaling pathways, the calcium, the mitogen-activated protein kinase (MAPK) kinase and the nuclear factor NF-kappa-B (NF-kB) pathways, leading to the mobilization of transcription factors that are critical for gene expression and essential for T cell growth and differentiation. The T cell repertoire is generated in the thymus, by V-(D)-J rearrangement. This repertoire is then shaped by intrathymic selection events to generate a peripheral T cell pool of self-MH restricted, non-autoaggressive T cells. Post-thymic interaction of alpha-beta TR with the pMH complexes shapes TR structural and functional avidity. The polypeptide is T cell receptor alpha variable 10 (Homo sapiens (Human)).